An 855-amino-acid polypeptide reads, in one-letter code: Alanine--tRNA ligase (855 aa).

The Zn(2+) site is built by His-555, His-559, Cys-657, and His-661.

The protein belongs to the class-II aminoacyl-tRNA synthetase family. The cofactor is Zn(2+).

It localises to the cytoplasm. It carries out the reaction tRNA(Ala) + L-alanine + ATP = L-alanyl-tRNA(Ala) + AMP + diphosphate. Its function is as follows. Catalyzes the attachment of alanine to tRNA(Ala) in a two-step reaction: alanine is first activated by ATP to form Ala-AMP and then transferred to the acceptor end of tRNA(Ala). Also edits incorrectly charged Ser-tRNA(Ala) and Gly-tRNA(Ala) via its editing domain. In Wolinella succinogenes (strain ATCC 29543 / DSM 1740 / CCUG 13145 / JCM 31913 / LMG 7466 / NCTC 11488 / FDC 602W) (Vibrio succinogenes), this protein is Alanine--tRNA ligase.